We begin with the raw amino-acid sequence, 90 residues long: Small ribosomal subunit protein uS17 (90 aa).

The protein belongs to the universal ribosomal protein uS17 family. Part of the 30S ribosomal subunit.

One of the primary rRNA binding proteins, it binds specifically to the 5'-end of 16S ribosomal RNA. The polypeptide is Small ribosomal subunit protein uS17 (Dehalococcoides mccartyi (strain ATCC BAA-2100 / JCM 16839 / KCTC 5957 / BAV1)).